A 798-amino-acid chain; its full sequence is Translation initiation factor IF-2 (798 aa).

Positions 40-207 (SEQETKLRQA…QQESAKPAVP (168 aa)) are disordered. Over residues 57–186 (NTQSKATNNQ…RNNFNNQNRN (130 aa)) the composition is skewed to low complexity. Positions 187–196 (RFNKKGKKGK) are enriched in basic residues. Positions 300-469 (TRPPVVTIMG…LLIAEVEDLK (170 aa)) constitute a tr-type G domain. Residues 309–316 (GHVDHGKT) form a G1 region. 309-316 (GHVDHGKT) is a binding site for GTP. The interval 334–338 (GITQH) is G2. Residues 355–358 (DTPG) form a G3 region. GTP is bound by residues 355–359 (DTPGH) and 409–412 (NKID). The segment at 409-412 (NKID) is G4. Residues 445–447 (SAK) are G5.

It belongs to the TRAFAC class translation factor GTPase superfamily. Classic translation factor GTPase family. IF-2 subfamily.

The protein resides in the cytoplasm. One of the essential components for the initiation of protein synthesis. Protects formylmethionyl-tRNA from spontaneous hydrolysis and promotes its binding to the 30S ribosomal subunits. Also involved in the hydrolysis of GTP during the formation of the 70S ribosomal complex. This is Translation initiation factor IF-2 from Enterococcus faecalis (strain ATCC 700802 / V583).